Here is a 1021-residue protein sequence, read N- to C-terminus: Transmembrane protein 132A (1021 aa).

The N-terminal stretch at 1–32 (MTERAAAAPRGPYGAWLCLLVALALEVVRVGS) is a signal peptide. Over 33-848 (NQNTLDPIYL…VTDLELGMYA (816 aa)) the chain is Extracellular. The segment at 207–226 (PAGEGPGGCGPGTEEEPKEQ) is disordered. Asn-276 is a glycosylation site (N-linked (GlcNAc...) asparagine). The tract at residues 606 to 913 (IEVRSPLSDS…QLDRCSSSSP (308 aa)) is binds to HSPA5/GRP78. Residues 666 to 1021 (LPAPKQEVAL…NYMERIRGSS (356 aa)) form a confers cellular localization similar to full-length form region. The disordered stretch occupies residues 793-835 (AGDMGSHVGPGIRGKFERAEEEAGKEENEAKEEEEDEEEMVPA). A compositionally biased stretch (basic and acidic residues) spans 806–820 (GKFERAEEEAGKEEN). Residues 821 to 832 (EAKEEEEDEEEM) are compositionally biased toward acidic residues. A helical membrane pass occupies residues 849-869 (LLGIFCLAFLIFLVNGVVFVL). The Cytoplasmic segment spans residues 870-1021 (RYQRKEPPDS…NYMERIRGSS (152 aa)). Residues 903-955 (RQLDRCSSSSPPKGEGGCPCESGAGGDTSTVAPSASESPAGSTSTLARKEAGG) form a disordered region. Positions 929–948 (DTSTVAPSASESPAGSTSTL) are enriched in polar residues.

It belongs to the TMEM132 family. Interacts with HSPA5/GRP78. As to expression, expressed in the brain in neuronal cells of the hypothalamus, thalamus, cerebral cortex, amygdala, and cerebellum.

Its subcellular location is the golgi apparatus membrane. The protein localises to the endoplasmic reticulum membrane. Its function is as follows. May play a role in embryonic and postnatal development of the brain. Increased resistance to cell death induced by serum starvation in cultured cells. Regulates cAMP-induced GFAP gene expression via STAT3 phosphorylation. This Rattus norvegicus (Rat) protein is Transmembrane protein 132A (Tmem132a).